Reading from the N-terminus, the 94-residue chain is Co-chaperonin GroES (94 aa).

This sequence belongs to the GroES chaperonin family. In terms of assembly, heptamer of 7 subunits arranged in a ring. Interacts with the chaperonin GroEL.

Its subcellular location is the cytoplasm. Its function is as follows. Together with the chaperonin GroEL, plays an essential role in assisting protein folding. The GroEL-GroES system forms a nano-cage that allows encapsulation of the non-native substrate proteins and provides a physical environment optimized to promote and accelerate protein folding. GroES binds to the apical surface of the GroEL ring, thereby capping the opening of the GroEL channel. This is Co-chaperonin GroES from Ehrlichia chaffeensis.